The chain runs to 566 residues: Arginine--tRNA ligase (566 aa).

Residues 129–139 (ANPTGPLHIGH) carry the 'HIGH' region motif.

This sequence belongs to the class-I aminoacyl-tRNA synthetase family. Monomer.

The protein localises to the cytoplasm. It carries out the reaction tRNA(Arg) + L-arginine + ATP = L-arginyl-tRNA(Arg) + AMP + diphosphate. The sequence is that of Arginine--tRNA ligase from Wolbachia pipientis subsp. Culex pipiens (strain wPip).